An 83-amino-acid chain; its full sequence is Cytochrome b559 subunit alpha (83 aa).

Residues 21-35 form a helical membrane-spanning segment; the sequence is VIHSITIPSLFVAGW. Histidine 23 is a heme binding site.

The protein belongs to the PsbE/PsbF family. In terms of assembly, heterodimer of an alpha subunit and a beta subunit. PSII is composed of 1 copy each of membrane proteins PsbA, PsbB, PsbC, PsbD, PsbE, PsbF, PsbH, PsbI, PsbJ, PsbK, PsbL, PsbM, PsbT, PsbX, PsbY, PsbZ, Psb30/Ycf12, at least 3 peripheral proteins of the oxygen-evolving complex and a large number of cofactors. It forms dimeric complexes. It depends on heme b as a cofactor.

Its subcellular location is the plastid. The protein resides in the chloroplast thylakoid membrane. In terms of biological role, this b-type cytochrome is tightly associated with the reaction center of photosystem II (PSII). PSII is a light-driven water:plastoquinone oxidoreductase that uses light energy to abstract electrons from H(2)O, generating O(2) and a proton gradient subsequently used for ATP formation. It consists of a core antenna complex that captures photons, and an electron transfer chain that converts photonic excitation into a charge separation. In Nephroselmis olivacea (Green alga), this protein is Cytochrome b559 subunit alpha.